The chain runs to 342 residues: N-acetyl-gamma-glutamyl-phosphate reductase (342 aa).

Residue C147 is part of the active site.

Belongs to the NAGSA dehydrogenase family. Type 1 subfamily.

Its subcellular location is the cytoplasm. The enzyme catalyses N-acetyl-L-glutamate 5-semialdehyde + phosphate + NADP(+) = N-acetyl-L-glutamyl 5-phosphate + NADPH + H(+). It participates in amino-acid biosynthesis; L-arginine biosynthesis; N(2)-acetyl-L-ornithine from L-glutamate: step 3/4. Its function is as follows. Catalyzes the NADPH-dependent reduction of N-acetyl-5-glutamyl phosphate to yield N-acetyl-L-glutamate 5-semialdehyde. This is N-acetyl-gamma-glutamyl-phosphate reductase from Campylobacter jejuni (strain RM1221).